The following is a 278-amino-acid chain: Dermonecrotic toxin LspiSicTox-betaIE2ii (278 aa).

Residue H5 is part of the active site. Mg(2+)-binding residues include E25 and D27. Catalysis depends on H41, which acts as the Nucleophile. 2 cysteine pairs are disulfide-bonded: C45–C51 and C47–C190. Mg(2+) is bound at residue D85.

Belongs to the arthropod phospholipase D family. Class II subfamily. The cofactor is Mg(2+). As to expression, expressed by the venom gland.

The protein localises to the secreted. It carries out the reaction an N-(acyl)-sphingosylphosphocholine = an N-(acyl)-sphingosyl-1,3-cyclic phosphate + choline. It catalyses the reaction an N-(acyl)-sphingosylphosphoethanolamine = an N-(acyl)-sphingosyl-1,3-cyclic phosphate + ethanolamine. The enzyme catalyses a 1-acyl-sn-glycero-3-phosphocholine = a 1-acyl-sn-glycero-2,3-cyclic phosphate + choline. The catalysed reaction is a 1-acyl-sn-glycero-3-phosphoethanolamine = a 1-acyl-sn-glycero-2,3-cyclic phosphate + ethanolamine. In terms of biological role, dermonecrotic toxins cleave the phosphodiester linkage between the phosphate and headgroup of certain phospholipids (sphingolipid and lysolipid substrates), forming an alcohol (often choline) and a cyclic phosphate. This toxin acts on sphingomyelin (SM). It may also act on ceramide phosphoethanolamine (CPE), lysophosphatidylcholine (LPC) and lysophosphatidylethanolamine (LPE), but not on lysophosphatidylserine (LPS), and lysophosphatidylglycerol (LPG). It acts by transphosphatidylation, releasing exclusively cyclic phosphate products as second products. Induces dermonecrosis, hemolysis, increased vascular permeability, edema, inflammatory response, and platelet aggregation. The chain is Dermonecrotic toxin LspiSicTox-betaIE2ii from Loxosceles spinulosa (Recluse spider).